A 255-amino-acid polypeptide reads, in one-letter code: Thiazole synthase (255 aa).

Lysine 96 acts as the Schiff-base intermediate with DXP in catalysis. Residues glycine 157, 183-184 (AG), and 205-206 (NS) each bind 1-deoxy-D-xylulose 5-phosphate.

This sequence belongs to the ThiG family. In terms of assembly, homotetramer. Forms heterodimers with either ThiH or ThiS.

The protein localises to the cytoplasm. It catalyses the reaction [ThiS sulfur-carrier protein]-C-terminal-Gly-aminoethanethioate + 2-iminoacetate + 1-deoxy-D-xylulose 5-phosphate = [ThiS sulfur-carrier protein]-C-terminal Gly-Gly + 2-[(2R,5Z)-2-carboxy-4-methylthiazol-5(2H)-ylidene]ethyl phosphate + 2 H2O + H(+). It participates in cofactor biosynthesis; thiamine diphosphate biosynthesis. Functionally, catalyzes the rearrangement of 1-deoxy-D-xylulose 5-phosphate (DXP) to produce the thiazole phosphate moiety of thiamine. Sulfur is provided by the thiocarboxylate moiety of the carrier protein ThiS. In vitro, sulfur can be provided by H(2)S. This is Thiazole synthase from Staphylococcus carnosus (strain TM300).